Here is a 629-residue protein sequence, read N- to C-terminus: 1-deoxy-D-xylulose-5-phosphate synthase (629 aa).

Thiamine diphosphate contacts are provided by residues His-72 and 113–115 (GHA). Residue Asp-144 participates in Mg(2+) binding. Thiamine diphosphate-binding positions include 145 to 146 (GA), Asn-174, Tyr-287, and Glu-370. Asn-174 contributes to the Mg(2+) binding site.

This sequence belongs to the transketolase family. DXPS subfamily. Homodimer. Mg(2+) is required as a cofactor. Thiamine diphosphate serves as cofactor.

The enzyme catalyses D-glyceraldehyde 3-phosphate + pyruvate + H(+) = 1-deoxy-D-xylulose 5-phosphate + CO2. The protein operates within metabolic intermediate biosynthesis; 1-deoxy-D-xylulose 5-phosphate biosynthesis; 1-deoxy-D-xylulose 5-phosphate from D-glyceraldehyde 3-phosphate and pyruvate: step 1/1. Its function is as follows. Catalyzes the acyloin condensation reaction between C atoms 2 and 3 of pyruvate and glyceraldehyde 3-phosphate to yield 1-deoxy-D-xylulose-5-phosphate (DXP). The polypeptide is 1-deoxy-D-xylulose-5-phosphate synthase (Prochlorococcus marinus (strain MIT 9301)).